A 570-amino-acid chain; its full sequence is Serine/threonine-protein kinase flr-4 (570 aa).

A Protein kinase domain is found at 40 to 331 (YKYIQDLGKG…KLRIQIKKIL (292 aa)). ATP contacts are provided by residues 46–54 (LGKGRFGTV) and Lys-67. Catalysis depends on Asp-172, which acts as the Proton acceptor. The interval 338-369 (EEETDISHPISNSNTDSSTAISHNHSNDRKVG) is disordered. Residues 346-361 (PISNSNTDSSTAISHN) are compositionally biased toward polar residues. 3 helical membrane-spanning segments follow: residues 400–420 (IMQIFVASGYYLSRILYFLNI), 425–445 (ICYLLLFLSLGITALGSFLLI), and 471–491 (LIISGILIVLMFALLFSCCMV). The disordered stretch occupies residues 550-570 (VRRNHDDYYYDESSGPANEEN).

Belongs to the protein kinase superfamily. Ser/Thr protein kinase family. Present in the intestinal cells from comma-stage embryos through the adult stage, although the intestinal expression is weaker after the L1 stage. Accumulates at the cell membrane of intestinal cells, especially the lateral membrane intervening the intestinal cells. Also detected in the muscles of the pharyngeal isthmus from the 3-fold embryonic stage, and in a pair of head neurons, which correspond to the AUA neurons, from the late L1 stage (at protein level).

Its subcellular location is the membrane. It carries out the reaction L-seryl-[protein] + ATP = O-phospho-L-seryl-[protein] + ADP + H(+). The enzyme catalyses L-threonyl-[protein] + ATP = O-phospho-L-threonyl-[protein] + ADP + H(+). Probable serine-threonine protein kinase involved in the control of defecation rhythms. Required to increase the length of defecation cycle period. Acts in a cell-functional rather than developmental aspect in the regulation of defecation rhythms. Prevents preferential activation of the p38 MAPK pathway in response to the levels of vitamin B12 in different food types during larval development, thereby regulating the expression of cytoprotective genes, modulating life span and stress tolerance. The sequence is that of Serine/threonine-protein kinase flr-4 (flr-4) from Caenorhabditis elegans.